The following is a 163-amino-acid chain: Crossover junction endodeoxyribonuclease RuvC (163 aa).

Active-site residues include aspartate 9, glutamate 76, and aspartate 148. Residues aspartate 9, glutamate 76, and aspartate 148 each coordinate Mg(2+).

It belongs to the RuvC family. In terms of assembly, homodimer which binds Holliday junction (HJ) DNA. The HJ becomes 2-fold symmetrical on binding to RuvC with unstacked arms; it has a different conformation from HJ DNA in complex with RuvA. In the full resolvosome a probable DNA-RuvA(4)-RuvB(12)-RuvC(2) complex forms which resolves the HJ. Requires Mg(2+) as cofactor.

It is found in the cytoplasm. It catalyses the reaction Endonucleolytic cleavage at a junction such as a reciprocal single-stranded crossover between two homologous DNA duplexes (Holliday junction).. Functionally, the RuvA-RuvB-RuvC complex processes Holliday junction (HJ) DNA during genetic recombination and DNA repair. Endonuclease that resolves HJ intermediates. Cleaves cruciform DNA by making single-stranded nicks across the HJ at symmetrical positions within the homologous arms, yielding a 5'-phosphate and a 3'-hydroxyl group; requires a central core of homology in the junction. The consensus cleavage sequence is 5'-(A/T)TT(C/G)-3'. Cleavage occurs on the 3'-side of the TT dinucleotide at the point of strand exchange. HJ branch migration catalyzed by RuvA-RuvB allows RuvC to scan DNA until it finds its consensus sequence, where it cleaves and resolves the cruciform DNA. This Nostoc sp. (strain PCC 7120 / SAG 25.82 / UTEX 2576) protein is Crossover junction endodeoxyribonuclease RuvC.